A 177-amino-acid chain; its full sequence is MSRIGKKPVQVPAGITATVDGQKVTAKGPKGELFFVANDEISLKLENNAVVVTPVNQTKDARSKWGMSRTMIEGIFKGVKDGFERKLEINGVGYRASLQGKNLQLALGFSHDVLYEPPVGITIAVPKPTEIVVSGINKQQVGQVAAEIREYRGPEPYKGKGVKYADERIVRKEGKKK.

This sequence belongs to the universal ribosomal protein uL6 family. As to quaternary structure, part of the 50S ribosomal subunit.

This protein binds to the 23S rRNA, and is important in its secondary structure. It is located near the subunit interface in the base of the L7/L12 stalk, and near the tRNA binding site of the peptidyltransferase center. This chain is Large ribosomal subunit protein uL6, found in Rhizobium leguminosarum bv. trifolii (strain WSM2304).